The chain runs to 465 residues: Argininosuccinate lyase (465 aa).

It belongs to the lyase 1 family. Argininosuccinate lyase subfamily.

Its subcellular location is the cytoplasm. The enzyme catalyses 2-(N(omega)-L-arginino)succinate = fumarate + L-arginine. It participates in amino-acid biosynthesis; L-arginine biosynthesis; L-arginine from L-ornithine and carbamoyl phosphate: step 3/3. In Desulfatibacillum aliphaticivorans, this protein is Argininosuccinate lyase.